The primary structure comprises 391 residues: Phosphoglycerate kinase (391 aa).

Substrate contacts are provided by residues 23 to 25 (DFN), R38, 61 to 64 (HLGK), R117, and R150. ATP contacts are provided by residues K201, G291, E322, and 348 to 351 (GGDS).

The protein belongs to the phosphoglycerate kinase family. Monomer.

It localises to the cytoplasm. The enzyme catalyses (2R)-3-phosphoglycerate + ATP = (2R)-3-phospho-glyceroyl phosphate + ADP. It participates in carbohydrate degradation; glycolysis; pyruvate from D-glyceraldehyde 3-phosphate: step 2/5. The sequence is that of Phosphoglycerate kinase from Clostridium beijerinckii (strain ATCC 51743 / NCIMB 8052) (Clostridium acetobutylicum).